The sequence spans 20 residues: EDSLSDWERVYLPIDPGVVL.

It belongs to the Ycf48 family.

The protein resides in the plastid. It localises to the chloroplast thylakoid lumen. Its function is as follows. Essential for photosystem II (PSII) biogenesis; required for assembly of an early intermediate in PSII assembly that includes D2 (psbD) and cytochrome b559. This Spinacia oleracea (Spinach) protein is Photosystem II stability/assembly factor HCF136, chloroplastic.